Consider the following 218-residue polypeptide: Thiopurine S-methyltransferase (218 aa).

S-adenosyl-L-methionine is bound by residues tryptophan 10, leucine 45, glutamate 66, and arginine 123.

It belongs to the class I-like SAM-binding methyltransferase superfamily. TPMT family.

It is found in the cytoplasm. It catalyses the reaction S-adenosyl-L-methionine + a thiopurine = S-adenosyl-L-homocysteine + a thiopurine S-methylether.. Functionally, involved in the biological cycling of tellurium and selenium. Tellurium resistance (Ter) mechanism. This chain is Thiopurine S-methyltransferase, found in Pseudomonas syringae pv. pisi.